A 668-amino-acid polypeptide reads, in one-letter code: UvrABC system protein B (668 aa).

In terms of domain architecture, Helicase ATP-binding spans 25–170 (NSILLGNKYQ…FVGQKISIKE (146 aa)). Residue 38 to 45 (GVTGSGKT) participates in ATP binding. A Beta-hairpin motif is present at residues 91-114 (YYDYYQPESYVPSKDLFIEKEATI). The region spanning 429–595 (QMEDLYSEIQ…TIVKKIQNIL (167 aa)) is the Helicase C-terminal domain. One can recognise a UVR domain in the interval 622 to 657 (KKLIDKLKFDLEEAVNDERFEDAIVLRDKIKELSSK).

It belongs to the UvrB family. Forms a heterotetramer with UvrA during the search for lesions. Interacts with UvrC in an incision complex.

It is found in the cytoplasm. In terms of biological role, the UvrABC repair system catalyzes the recognition and processing of DNA lesions. A damage recognition complex composed of 2 UvrA and 2 UvrB subunits scans DNA for abnormalities. Upon binding of the UvrA(2)B(2) complex to a putative damaged site, the DNA wraps around one UvrB monomer. DNA wrap is dependent on ATP binding by UvrB and probably causes local melting of the DNA helix, facilitating insertion of UvrB beta-hairpin between the DNA strands. Then UvrB probes one DNA strand for the presence of a lesion. If a lesion is found the UvrA subunits dissociate and the UvrB-DNA preincision complex is formed. This complex is subsequently bound by UvrC and the second UvrB is released. If no lesion is found, the DNA wraps around the other UvrB subunit that will check the other stand for damage. The polypeptide is UvrABC system protein B (Borreliella burgdorferi (strain ZS7) (Borrelia burgdorferi)).